We begin with the raw amino-acid sequence, 174 residues long: UPF0316 protein Dhaf_3052 (174 aa).

3 consecutive transmembrane segments (helical) span residues isoleucine 4–isoleucine 24, valine 35–isoleucine 55, and leucine 59–glycine 79.

The protein belongs to the UPF0316 family.

It is found in the cell membrane. This is UPF0316 protein Dhaf_3052 from Desulfitobacterium hafniense (strain DSM 10664 / DCB-2).